The primary structure comprises 207 residues: Holliday junction branch migration complex subunit RuvA (207 aa).

Residues 1 to 63 (MIDSLHGEVL…DDGIDLYAFE (63 aa)) form a domain I region. The segment at 64 to 142 (SDEARQMFAM…VFDSGDSASE (79 aa)) is domain II. The tract at residues 143–154 (PQSGVGGNSEAE) is flexible linker. A domain III region spans residues 155-207 (VDSGVVGTVTQALVELGFPEKQAEKTATSAAAEGGSVSEILKRALRSMSSERN).

The protein belongs to the RuvA family. As to quaternary structure, homotetramer. Forms an RuvA(8)-RuvB(12)-Holliday junction (HJ) complex. HJ DNA is sandwiched between 2 RuvA tetramers; dsDNA enters through RuvA and exits via RuvB. An RuvB hexamer assembles on each DNA strand where it exits the tetramer. Each RuvB hexamer is contacted by two RuvA subunits (via domain III) on 2 adjacent RuvB subunits; this complex drives branch migration. In the full resolvosome a probable DNA-RuvA(4)-RuvB(12)-RuvC(2) complex forms which resolves the HJ.

It localises to the cytoplasm. In terms of biological role, the RuvA-RuvB-RuvC complex processes Holliday junction (HJ) DNA during genetic recombination and DNA repair, while the RuvA-RuvB complex plays an important role in the rescue of blocked DNA replication forks via replication fork reversal (RFR). RuvA specifically binds to HJ cruciform DNA, conferring on it an open structure. The RuvB hexamer acts as an ATP-dependent pump, pulling dsDNA into and through the RuvAB complex. HJ branch migration allows RuvC to scan DNA until it finds its consensus sequence, where it cleaves and resolves the cruciform DNA. In Corynebacterium kroppenstedtii (strain DSM 44385 / JCM 11950 / CIP 105744 / CCUG 35717), this protein is Holliday junction branch migration complex subunit RuvA.